The chain runs to 354 residues: Guanine nucleotide-binding protein G(i) subunit alpha-1 (354 aa).

Residue G2 is the site of N-myristoyl glycine attachment. Residue C3 is the site of S-palmitoyl cysteine attachment. Residues 32 to 354 (REVKLLLLGA…KNNLKDCGLF (323 aa)) form the G-alpha domain. Residues 35 to 48 (KLLLLGAGESGKST) form a G1 motif region. GTP-binding positions include 43 to 48 (ESGKST), 150 to 151 (DS), and 175 to 178 (LRTR). S47 contributes to the Mg(2+) binding site. A G2 motif region spans residues 173–181 (DVLRTRVKT). Residue T181 coordinates Mg(2+). The segment at 196–205 (FKMFDVGGQR) is G3 motif. GTP is bound by residues 200 to 204 (DVGGQ), 269 to 272 (NKKD), and A326. Residues 265–272 (ILFLNKKD) form a G4 motif region. Positions 324-329 (TCATDT) are G5 motif.

Belongs to the G-alpha family. G(i/o/t/z) subfamily. As to quaternary structure, heterotrimeric G proteins are composed of 3 units; alpha, beta and gamma. The alpha chain contains the guanine nucleotide binding site. Part of a spindle orientation complex at least composed of GNAI1, GPSM2 and NUMA1. Identified in complex with the beta subunit GNB1 and the gamma subunit GNG1. Identified in complex with the beta subunit GNB1 and the gamma subunit GNG2. Component of the TAS2R14-GNAI1 complex, consisting of TAS2R14, GNAI1, GNB1 and GNG2; within the complex interacts with TAS2R14; this complex plays a role in the perception of bitterness. GTP binding causes dissociation of the heterotrimer, liberating the individual subunits so that they can interact with downstream effector proteins. Interacts (GDP-bound form) with GPSM1; this inhibits guanine nucleotide exchange and GTP binding. Interacts (GDP-bound form) with GPSM2 (via GoLoco domains); this inhibits guanine nucleotide exchange. Interacts with RGS10; this strongly enhances GTP hydrolysis. Interacts with RGS1 and RGS16; this strongly enhances GTPase activity. Interacts with RGS4. Interacts with RGS12. Interacts (via active GTP- or inactive GDP-bound forms) with RGS14 (via RGS and GoLoco domains). Interacts with RGS3, RGS6, RGS7, RGS8, RGS17, RGS18 and RGS20 (in vitro). Interacts (GDP-bound form) with RIC8A (via C-terminus); promoting GNAI1 folding and association with the plasma membrane. Interacts (inactive GDP-bound form) with NUCB1 (via GBA motif); the interaction leads to activation of GNAI1. Interacts (inactive GDP-bound form) with CCDC88C/DAPLE (via GBA motif); the interaction leads to activation of GNAI1. Interacts (inactive GDP-bound form) with CCDC8A/GIV (via GBA motif). Myristoylation at Gly-2 is required for membrane anchoring before palmitoylation. Post-translationally, palmitoylation at Cys-3 varies with membrane lipid composition. In terms of tissue distribution, mainly expressed in the brain, lung and kidney.

Its subcellular location is the nucleus. The protein resides in the cytoplasm. It localises to the cell membrane. It is found in the cytoskeleton. The protein localises to the microtubule organizing center. Its subcellular location is the centrosome. The protein resides in the cell cortex. It localises to the membrane. It catalyses the reaction GTP + H2O = GDP + phosphate + H(+). Guanine nucleotide-binding proteins (G proteins) function as transducers downstream of G protein-coupled receptors (GPCRs) in numerous signaling cascades. The alpha chain contains the guanine nucleotide binding site and alternates between an active, GTP-bound state and an inactive, GDP-bound state. Signaling by an activated GPCR promotes GDP release and GTP binding. The alpha subunit has a low GTPase activity that converts bound GTP to GDP, thereby terminating the signal. Both GDP release and GTP hydrolysis are modulated by numerous regulatory proteins. Signaling is mediated via effector proteins, such as adenylate cyclase. Inhibits adenylate cyclase activity of ADCY1, ADCY5 and ADCY6, leading to decreased intracellular cAMP levels. The inactive GDP-bound form prevents the association of RGS14 with centrosomes and is required for the translocation of RGS14 from the cytoplasm to the plasma membrane. Required for normal cytokinesis during mitosis. Required for cortical dynein-dynactin complex recruitment during metaphase. In Cavia porcellus (Guinea pig), this protein is Guanine nucleotide-binding protein G(i) subunit alpha-1 (GNAI1).